A 472-amino-acid polypeptide reads, in one-letter code: MKSAAYLAALAAVLPAYVNAQAQEWGQCGGIGWTGATTCVSGTVCTVLNPYYSQCLPGTATTAPPPPPPPPTSVSSSSSSSTSSAPPSGPSGTSPTCSVASTIPGFSNAALPNPFVFNDGSPVQSKADFTCRQQQILALIQGYEAGALPGPPQSVTASFSKSGSTGTLSITVTDNGKSISFAPTISIPSGTPPANGWPLVIAFEGGSIPIPAGIAKLTYSNSDMAQQTDTSSRGKGLFYNLYGSGATASAMTAWAWGVSRIIDALEKTPSAQINTQRIAVTGCSRDGKGALMAGALEPRIALTIPQESGSGGDTCWRLSKAESDQGHQVQTATEIVTENVWFSTNFNNYVNNLNVLPYDHHMLMALVAPRALVSFENTDYTWLSPMSAWGCVNAAHTVFSALGVADHHGFAQVGGHAHCAWPDSLTPSLNAFFNRFLLDQNVDTNVFTTNNQFGGATWTQSSWINWSTPTLS.

The signal sequence occupies residues 1 to 20 (MKSAAYLAALAAVLPAYVNA). The CBM1 domain occupies 21–56 (QAQEWGQCGGIGWTGATTCVSGTVCTVLNPYYSQCL). The interval 62–97 (TAPPPPPPPPTSVSSSSSSSTSSAPPSGPSGTSPTC) is disordered. The segment covering 63–72 (APPPPPPPPT) has biased composition (pro residues). Residues 73-96 (SVSSSSSSSTSSAPPSGPSGTSPT) show a composition bias toward low complexity. Disulfide bonds link Cys-97/Cys-131, Cys-283/Cys-419, and Cys-315/Cys-391. A GXSYXG catalytic site motif motif is present at residues 282 to 287 (GCSRDG). Ser-284 serves as the catalytic Nucleophile. The substrate site is built by Lys-288, Gln-330, Glu-338, and Trp-382. The Proton donor/acceptor role is filled by His-418. N-linked (GlcNAc...) asparagine glycosylation is present at Asn-465.

The protein belongs to the carbohydrate esterase 15 (CE15) family.

Its subcellular location is the secreted. The catalysed reaction is a 4-O-methyl-alpha-D-glucuronosyl ester derivative + H2O = 4-O-methyl-alpha-D-glucuronate derivative + an alcohol + H(+). Its function is as follows. Glucuronoyl esterase which may play a significant role in biomass degradation, as it is considered to disconnect hemicellulose from lignin through the hydrolysis of the ester bond between 4-O-methyl-D-glucuronic acid residues of glucuronoxylans and aromatic alcohols of lignin. Can hydrolyze benzyl glucuronic acid (BnGlcA), allyl glucuronic acid (allylGlcA) and to a lower degree methyl glucuronic acid (MeGlcA) in vitro. This chain is 4-O-methyl-glucuronoyl methylesterase 1, found in Phanerochaete chrysosporium (strain RP-78 / ATCC MYA-4764 / FGSC 9002) (White-rot fungus).